Here is a 333-residue protein sequence, read N- to C-terminus: Eukaryotic translation initiation factor 3 subunit H-B (333 aa).

The MPN domain maps to 20–154 (IQIEGLVVMK…LKAYRLTPKL (135 aa)). A disordered region spans residues 249 to 295 (SKQQQQKHQYVQRRQQENAQRQSRGEPPLPEEDLTKMFKPPQPPPRM). Over residues 250 to 261 (KQQQQKHQYVQR) the composition is skewed to low complexity.

The protein belongs to the eIF-3 subunit H family. In terms of assembly, component of the eukaryotic translation initiation factor 3 (eIF-3) complex, which is composed of 13 subunits: eif3a, eif3b, eif3c, eif3d, eif3e, eif3f, eif3g, eif3h, eif3i, eif3j, eif3k, eif3l and eif3m.

It localises to the cytoplasm. In terms of biological role, component of the eukaryotic translation initiation factor 3 (eIF-3) complex, which is involved in protein synthesis of a specialized repertoire of mRNAs and, together with other initiation factors, stimulates binding of mRNA and methionyl-tRNAi to the 40S ribosome. The eIF-3 complex specifically targets and initiates translation of a subset of mRNAs involved in cell proliferation. The chain is Eukaryotic translation initiation factor 3 subunit H-B (eif3hb) from Danio rerio (Zebrafish).